Consider the following 522-residue polypeptide: Glutamate--cysteine ligase (522 aa).

It belongs to the glutamate--cysteine ligase type 1 family. Type 1 subfamily.

It catalyses the reaction L-cysteine + L-glutamate + ATP = gamma-L-glutamyl-L-cysteine + ADP + phosphate + H(+). It participates in sulfur metabolism; glutathione biosynthesis; glutathione from L-cysteine and L-glutamate: step 1/2. The polypeptide is Glutamate--cysteine ligase (Vibrio parahaemolyticus serotype O3:K6 (strain RIMD 2210633)).